Consider the following 367-residue polypeptide: Membrane-bound lytic murein transglycosylase C (367 aa).

The signal sequence occupies residues 1-19; sequence MRKYAKYLPFCLVVPFLAA. The N-palmitoyl cysteine moiety is linked to residue C20. C20 is lipidated: S-diacylglycerol cysteine.

This sequence belongs to the transglycosylase Slt family.

The protein resides in the cell outer membrane. It catalyses the reaction Exolytic cleavage of the (1-&gt;4)-beta-glycosidic linkage between N-acetylmuramic acid (MurNAc) and N-acetylglucosamine (GlcNAc) residues in peptidoglycan, from either the reducing or the non-reducing ends of the peptidoglycan chains, with concomitant formation of a 1,6-anhydrobond in the MurNAc residue.. Functionally, murein-degrading enzyme. May play a role in recycling of muropeptides during cell elongation and/or cell division. The polypeptide is Membrane-bound lytic murein transglycosylase C (Haemophilus ducreyi (strain 35000HP / ATCC 700724)).